A 456-amino-acid polypeptide reads, in one-letter code: ATP-dependent protease ATPase subunit HslU (456 aa).

ATP contacts are provided by residues Val18, 60 to 65, Asp269, Glu334, and Arg406; that span reads GVGKTE.

It belongs to the ClpX chaperone family. HslU subfamily. In terms of assembly, a double ring-shaped homohexamer of HslV is capped on each side by a ring-shaped HslU homohexamer. The assembly of the HslU/HslV complex is dependent on binding of ATP.

The protein resides in the cytoplasm. In terms of biological role, ATPase subunit of a proteasome-like degradation complex; this subunit has chaperone activity. The binding of ATP and its subsequent hydrolysis by HslU are essential for unfolding of protein substrates subsequently hydrolyzed by HslV. HslU recognizes the N-terminal part of its protein substrates and unfolds these before they are guided to HslV for hydrolysis. The protein is ATP-dependent protease ATPase subunit HslU of Desulfosudis oleivorans (strain DSM 6200 / JCM 39069 / Hxd3) (Desulfococcus oleovorans).